The sequence spans 192 residues: Small ribosomal subunit protein uS5 (192 aa).

An S5 DRBM domain is found at 20–83 (FVDRLVHINR…EAAKRGLIRV (64 aa)). The tract at residues 165 to 192 (ARRGLKVSALQARRRDAEPGSADSADAA) is disordered.

Belongs to the universal ribosomal protein uS5 family. As to quaternary structure, part of the 30S ribosomal subunit. Contacts proteins S4 and S8.

With S4 and S12 plays an important role in translational accuracy. Its function is as follows. Located at the back of the 30S subunit body where it stabilizes the conformation of the head with respect to the body. This is Small ribosomal subunit protein uS5 from Methylobacterium sp. (strain 4-46).